We begin with the raw amino-acid sequence, 89 residues long: Large ribosomal subunit protein eL34 (89 aa).

It belongs to the eukaryotic ribosomal protein eL34 family.

This Methanococcus vannielii (strain ATCC 35089 / DSM 1224 / JCM 13029 / OCM 148 / SB) protein is Large ribosomal subunit protein eL34.